We begin with the raw amino-acid sequence, 294 residues long: ATP synthase gamma chain (294 aa).

This sequence belongs to the ATPase gamma chain family. In terms of assembly, F-type ATPases have 2 components, CF(1) - the catalytic core - and CF(0) - the membrane proton channel. CF(1) has five subunits: alpha(3), beta(3), gamma(1), delta(1), epsilon(1). CF(0) has three main subunits: a, b and c.

It is found in the cell inner membrane. In terms of biological role, produces ATP from ADP in the presence of a proton gradient across the membrane. The gamma chain is believed to be important in regulating ATPase activity and the flow of protons through the CF(0) complex. This chain is ATP synthase gamma chain, found in Rhizobium leguminosarum bv. trifolii (strain WSM2304).